The following is a 445-amino-acid chain: Trigger factor (445 aa).

A PPIase FKBP-type domain is found at Gly162–Thr247.

Belongs to the FKBP-type PPIase family. Tig subfamily.

The protein localises to the cytoplasm. It catalyses the reaction [protein]-peptidylproline (omega=180) = [protein]-peptidylproline (omega=0). Involved in protein export. Acts as a chaperone by maintaining the newly synthesized protein in an open conformation. Functions as a peptidyl-prolyl cis-trans isomerase. This Rickettsia bellii (strain OSU 85-389) protein is Trigger factor.